The primary structure comprises 143 residues: Large ribosomal subunit protein uL16c (143 aa).

The protein belongs to the universal ribosomal protein uL16 family. In terms of assembly, part of the 50S ribosomal subunit.

The protein localises to the plastid. It is found in the chloroplast. In Marchantia polymorpha (Common liverwort), this protein is Large ribosomal subunit protein uL16c.